Consider the following 164-residue polypeptide: HTH-type transcriptional regulator IscR (164 aa).

The 130-residue stretch at 2–131 (RLTSKGRYAV…NNITLGELVN (130 aa)) folds into the HTH rrf2-type domain. The H-T-H motif DNA-binding region spans 28-51 (LADISERQGISLSYLEQLFSRLRK). [2Fe-2S] cluster contacts are provided by cysteine 92, cysteine 98, and cysteine 104.

The cofactor is [2Fe-2S] cluster.

Functionally, regulates the transcription of several operons and genes involved in the biogenesis of Fe-S clusters and Fe-S-containing proteins. In Salmonella agona (strain SL483), this protein is HTH-type transcriptional regulator IscR.